The following is a 354-amino-acid chain: Phosphate acyltransferase (354 aa).

Belongs to the PlsX family. Homodimer. Probably interacts with PlsY.

Its subcellular location is the cytoplasm. The enzyme catalyses a fatty acyl-[ACP] + phosphate = an acyl phosphate + holo-[ACP]. Its pathway is lipid metabolism; phospholipid metabolism. Functionally, catalyzes the reversible formation of acyl-phosphate (acyl-PO(4)) from acyl-[acyl-carrier-protein] (acyl-ACP). This enzyme utilizes acyl-ACP as fatty acyl donor, but not acyl-CoA. The chain is Phosphate acyltransferase from Ralstonia nicotianae (strain ATCC BAA-1114 / GMI1000) (Ralstonia solanacearum).